The sequence spans 90 residues: Putative sodium channel toxin Ts28 (90 aa).

A signal peptide spans M1–G23. The region spanning P26–D86 is the LCN-type CS-alpha/beta domain. Cystine bridges form between C40/C60, C46/C65, and C50/C67.

It belongs to the long (3 C-C) scorpion toxin superfamily. Monomer (edited version) and heterodimer (non-edited version) of this alpha chain and a beta chain (AC P0CI43). As to expression, expressed by the venom gland.

Its subcellular location is the secreted. Its function is as follows. The edited BmKBTx-like may modulate voltage-gated sodium channels (Nav). The non-edited form is able to form a heterodimer. In orthologs, a heterodimer with LVP beta-chain induces lipolysis in rat adipocytes, which is mediated through the beta-2 adrenergic receptor pathway (ADRB2). Since no LVP beta-chains have been identified in the venom of this scorpion, it is possible that this protein is not involved in a lipolysis process. The polypeptide is Putative sodium channel toxin Ts28 (Tityus serrulatus (Brazilian scorpion)).